Here is a 390-residue protein sequence, read N- to C-terminus: Formate-dependent phosphoribosylglycinamide formyltransferase (390 aa).

Residues glutamate 14–leucine 15 and glutamate 74 each bind N(1)-(5-phospho-beta-D-ribosyl)glycinamide. ATP-binding positions include arginine 106, lysine 147, serine 152 to glutamine 157, glutamate 187 to isoleucine 190, and glutamate 195. Residues aspartate 111–methionine 304 enclose the ATP-grasp domain. Residues glutamate 263 and glutamate 275 each coordinate Mg(2+). N(1)-(5-phospho-beta-D-ribosyl)glycinamide-binding positions include aspartate 282, lysine 351, and arginine 358–arginine 359.

The protein belongs to the PurK/PurT family. As to quaternary structure, homodimer.

The enzyme catalyses N(1)-(5-phospho-beta-D-ribosyl)glycinamide + formate + ATP = N(2)-formyl-N(1)-(5-phospho-beta-D-ribosyl)glycinamide + ADP + phosphate + H(+). It participates in purine metabolism; IMP biosynthesis via de novo pathway; N(2)-formyl-N(1)-(5-phospho-D-ribosyl)glycinamide from N(1)-(5-phospho-D-ribosyl)glycinamide (formate route): step 1/1. In terms of biological role, involved in the de novo purine biosynthesis. Catalyzes the transfer of formate to 5-phospho-ribosyl-glycinamide (GAR), producing 5-phospho-ribosyl-N-formylglycinamide (FGAR). Formate is provided by PurU via hydrolysis of 10-formyl-tetrahydrofolate. The protein is Formate-dependent phosphoribosylglycinamide formyltransferase of Erythrobacter litoralis (strain HTCC2594).